An 81-amino-acid polypeptide reads, in one-letter code: Large ribosomal subunit protein uL23 (81 aa).

The protein belongs to the universal ribosomal protein uL23 family. Part of the 50S ribosomal subunit. Contacts protein L29.

Binds to 23S rRNA. One of the proteins that surrounds the polypeptide exit tunnel on the outside of the ribosome. This Pyrobaculum aerophilum (strain ATCC 51768 / DSM 7523 / JCM 9630 / CIP 104966 / NBRC 100827 / IM2) protein is Large ribosomal subunit protein uL23.